Consider the following 201-residue polypeptide: uncharacterized protein (201 aa).

The first 19 residues, 1–19 (MKLIVSVFLIGCQFLNILG), serve as a signal peptide directing secretion.

This is an uncharacterized protein from Acheta domesticus (House cricket).